The following is a 511-amino-acid chain: Probable pectinesterase/pectinesterase inhibitor 17 (511 aa).

The first 23 residues, 1-23 (MMAFRAYIINFVILCILVASTVS), serve as a signal peptide directing secretion. Positions 24 to 171 (GYNQKDVKAW…SNLLCNTLAI (148 aa)) are pectinesterase inhibitor 17. N-linked (GlcNAc...) asparagine glycans are attached at residues Asn-112 and Asn-160. A pectinesterase 17 region spans residues 237-414 (VKQGVYSENL…LRPVLGSTKT (178 aa)). Substrate contacts are provided by Thr-277 and Gln-307. Residue Asp-330 is the Proton donor; for pectinesterase activity of the active site. A disulfide bridge connects residues Cys-344 and Cys-364. Residue Asp-351 is the Nucleophile; for pectinesterase activity of the active site. Residues Arg-418 and Trp-420 each contribute to the substrate site.

This sequence in the N-terminal section; belongs to the PMEI family. In the C-terminal section; belongs to the pectinesterase family. As to expression, expressed in siliques.

It is found in the secreted. Its subcellular location is the cell wall. The catalysed reaction is [(1-&gt;4)-alpha-D-galacturonosyl methyl ester](n) + n H2O = [(1-&gt;4)-alpha-D-galacturonosyl](n) + n methanol + n H(+). It functions in the pathway glycan metabolism; pectin degradation; 2-dehydro-3-deoxy-D-gluconate from pectin: step 1/5. Its function is as follows. Acts in the modification of cell walls via demethylesterification of cell wall pectin. In Arabidopsis thaliana (Mouse-ear cress), this protein is Probable pectinesterase/pectinesterase inhibitor 17 (PME17).